The primary structure comprises 226 residues: Movement and silencing protein TGBp1 (226 aa).

The 115-residue stretch at 1-115 (MDILIISLKS…EFSLEPHFYL (115 aa)) folds into the (+)RNA virus helicase ATP-binding domain. In terms of domain architecture, (+)RNA virus helicase C-terminal spans 116 to 226 (ETSFRVPRKV…KGLTYVRAGT (111 aa)).

The protein belongs to the Tymovirales TGBp1 protein family. As to quaternary structure, homodimer and homooligomer. Interacts with capsid protein. Interacts with host AGO1; this interaction targets the host protein for degradation, thereby suppressing the antiviral RNA silencing.

The protein resides in the host cytoplasm. Its function is as follows. Transports viral genome to neighboring plant cells directly through plasmosdesmata, without any budding. The movement protein allows efficient cell to cell propagation, by bypassing the host cell wall barrier. Increases plasmodesma size exclusion limit. Acts as a suppressor of RNA-mediated gene silencing, also known as post-transcriptional gene silencing (PTGS), a mechanism of plant viral defense that limits the accumulation of viral RNAs. This Brassica campestris (Field mustard) protein is Movement and silencing protein TGBp1.